The chain runs to 965 residues: SKI family transcriptional corepressor 1 (965 aa).

Disordered stretches follow at residues 45-72, 278-367, 410-458, 530-592, 615-777, and 796-843; these read TQLG…SSAL, RTFS…GGGA, DDPV…GGGA, SGAP…GSYV, AYGA…FAPE, and VCTP…EDGL. 3 stretches are compositionally biased toward gly residues: residues 283 to 312, 356 to 367, and 418 to 442; these read QGGG…GPGC, GPAGPGGPGGGA, and EPKG…GGPG. Residues 571-586 are compositionally biased toward pro residues; the sequence is LPPPLAPLPPPPPPPA. Positions 620 to 632 are enriched in gly residues; that stretch reads PARGPGPGAGSGG. Polar residues predominate over residues 641–650; sequence EGSSSYNSAS. Acidic residues-rich tracts occupy residues 654–663 and 670–679; these read DTADEPEVDV and DDEDAQEETE. Over residues 800 to 823 the composition is skewed to basic and acidic residues; that stretch reads EAHEPDKEDNHSPADDLETRKSYP. Residues 824–835 show a composition bias toward polar residues; it reads DQRSISQPSPAN. Residues 858-922 are a coiled coil; that stretch reads ENLAREELQK…DTLCNELDQE (65 aa).

This sequence belongs to the SKI family. Interacts with LBX1. Interacts with SMAD1, SMAD2 and SMAD3. As to expression, present specifically in cerebellar Purkinje cells (at protein level).

The protein resides in the nucleus. Functionally, acts as a transcriptional corepressor of LBX1. Inhibits BMP signaling. The sequence is that of SKI family transcriptional corepressor 1 (SKOR1) from Homo sapiens (Human).